A 362-amino-acid chain; its full sequence is Diphosphomevalonate decarboxylase (362 aa).

(R)-5-diphosphomevalonate is bound by residues 17–20 (YWGK), arginine 72, 150–155 (SGSACR), and threonine 206.

Belongs to the diphosphomevalonate decarboxylase family. In terms of assembly, homodimer.

The enzyme catalyses (R)-5-diphosphomevalonate + ATP = isopentenyl diphosphate + ADP + phosphate + CO2. It participates in isoprenoid biosynthesis; isopentenyl diphosphate biosynthesis via mevalonate pathway; isopentenyl diphosphate from (R)-mevalonate: step 3/3. In terms of biological role, diphosphomevalonate decarboxylase; part of the second module of ergosterol biosynthesis pathway that includes the middle steps of the pathway. MVD1 converts diphosphomevalonate into isopentenyl diphosphate. The second module is carried out in the vacuole and involves the formation of farnesyl diphosphate, which is also an important intermediate in the biosynthesis of ubiquinone, dolichol, heme and prenylated proteins. Activity by the mevalonate kinase ERG12 first converts mevalonate into 5-phosphomevalonate. 5-phosphomevalonate is then further converted to 5-diphosphomevalonate by the phosphomevalonate kinase ERG8. The diphosphomevalonate decarboxylase MVD then produces isopentenyl diphosphate. The isopentenyl-diphosphate delta-isomerase IDI1 then catalyzes the 1,3-allylic rearrangement of the homoallylic substrate isopentenyl (IPP) to its highly electrophilic allylic isomer, dimethylallyl diphosphate (DMAPP). Finally the farnesyl diphosphate synthase ERG20 catalyzes the sequential condensation of isopentenyl pyrophosphate with dimethylallyl pyrophosphate, and then with the resultant geranylpyrophosphate to the ultimate product farnesyl pyrophosphate. The polypeptide is Diphosphomevalonate decarboxylase (Candida albicans (strain SC5314 / ATCC MYA-2876) (Yeast)).